We begin with the raw amino-acid sequence, 120 residues long: Large ribosomal subunit protein uL18 (120 aa).

The disordered stretch occupies residues 1 to 24 (MITKAAKNATRKKRHARVRAKLTG). The span at 9–20 (ATRKKRHARVRA) shows a compositional bias: basic residues.

It belongs to the universal ribosomal protein uL18 family. As to quaternary structure, part of the 50S ribosomal subunit; part of the 5S rRNA/L5/L18/L25 subcomplex. Contacts the 5S and 23S rRNAs.

Functionally, this is one of the proteins that bind and probably mediate the attachment of the 5S RNA into the large ribosomal subunit, where it forms part of the central protuberance. This Bacillus mycoides (strain KBAB4) (Bacillus weihenstephanensis) protein is Large ribosomal subunit protein uL18.